Here is a 269-residue protein sequence, read N- to C-terminus: Zinc transporter ZupT (269 aa).

The next 8 membrane-spanning stretches (helical) occupy residues 11-31 (IALA…LLVL), 40-60 (LLAF…LSEI), 80-100 (YGTL…HFIP), 125-145 (ALLT…ATFF), 158-178 (AFAI…PVYF), 187-207 (FSAS…GYWL), 217-237 (FGWV…DELL), and 249-269 (TVYG…LFKW). Asn136 and Glu139 together coordinate Fe(2+). 2 residues coordinate Zn(2+): Glu139 and His164. Fe(2+) contacts are provided by Asn165, Glu168, and Glu197. Glu168 is a binding site for Zn(2+).

This sequence belongs to the ZIP transporter (TC 2.A.5) family. ZupT subfamily.

It localises to the cell inner membrane. The catalysed reaction is Zn(2+)(in) = Zn(2+)(out). Its function is as follows. Mediates zinc uptake. May also transport other divalent cations. The polypeptide is Zinc transporter ZupT (Stenotrophomonas maltophilia (strain R551-3)).